We begin with the raw amino-acid sequence, 358 residues long: Membrane-bound lytic murein transglycosylase C (358 aa).

A signal peptide spans 1 to 16; that stretch reads MKKILALLVIAPLLVS. A lipid anchor (N-palmitoyl cysteine) is attached at cysteine 17. Residue cysteine 17 is the site of S-diacylglycerol cysteine attachment.

The protein belongs to the transglycosylase Slt family.

The protein resides in the cell outer membrane. It catalyses the reaction Exolytic cleavage of the (1-&gt;4)-beta-glycosidic linkage between N-acetylmuramic acid (MurNAc) and N-acetylglucosamine (GlcNAc) residues in peptidoglycan, from either the reducing or the non-reducing ends of the peptidoglycan chains, with concomitant formation of a 1,6-anhydrobond in the MurNAc residue.. Its function is as follows. Murein-degrading enzyme. May play a role in recycling of muropeptides during cell elongation and/or cell division. The chain is Membrane-bound lytic murein transglycosylase C from Yersinia pseudotuberculosis serotype O:1b (strain IP 31758).